A 406-amino-acid chain; its full sequence is Arginine deiminase (406 aa).

The active-site Amidino-cysteine intermediate is Cys396.

This sequence belongs to the arginine deiminase family.

The protein localises to the cytoplasm. The enzyme catalyses L-arginine + H2O = L-citrulline + NH4(+). The protein operates within amino-acid degradation; L-arginine degradation via ADI pathway; carbamoyl phosphate from L-arginine: step 1/2. In Aliivibrio salmonicida (strain LFI1238) (Vibrio salmonicida (strain LFI1238)), this protein is Arginine deiminase.